The primary structure comprises 153 residues: UPF0311 protein Rpal_1987 (153 aa).

This sequence belongs to the UPF0311 family.

The protein is UPF0311 protein Rpal_1987 of Rhodopseudomonas palustris (strain TIE-1).